Reading from the N-terminus, the 897-residue chain is Translation initiation factor IF-2 (897 aa).

2 disordered regions span residues 69-88 (RKTKSTISVQGTGGKNKEVQ) and 95-304 (RTYV…NAMK). Positions 101–161 (SALEDEQRQA…EEKARIEAQQ (61 aa)) are enriched in basic and acidic residues. A compositionally biased stretch (low complexity) spans 162 to 179 (KARQAQQPAKAAGSTAQQ). Composition is skewed to basic and acidic residues over residues 180–196 (EAEKMAKREAEELKRQQ), 203–217 (KAEELAAKKAEEARV), 226–239 (WAEEEAARAKESSD), and 277–286 (RREDDRDARN). Basic residues predominate over residues 287–296 (PRARKGKRGK). In terms of domain architecture, tr-type G spans 397–566 (PRAPVVTIMG…LIQSEVLELK (170 aa)). Positions 406–413 (GHVDHGKT) are G1. 406–413 (GHVDHGKT) contacts GTP. The tract at residues 431 to 435 (GITQH) is G2. Positions 452–455 (DTPG) are G3. GTP-binding positions include 452–456 (DTPGH) and 506–509 (NKID). The segment at 506-509 (NKID) is G4. The tract at residues 542–544 (SAK) is G5.

Belongs to the TRAFAC class translation factor GTPase superfamily. Classic translation factor GTPase family. IF-2 subfamily.

It localises to the cytoplasm. One of the essential components for the initiation of protein synthesis. Protects formylmethionyl-tRNA from spontaneous hydrolysis and promotes its binding to the 30S ribosomal subunits. Also involved in the hydrolysis of GTP during the formation of the 70S ribosomal complex. This Aeromonas hydrophila subsp. hydrophila (strain ATCC 7966 / DSM 30187 / BCRC 13018 / CCUG 14551 / JCM 1027 / KCTC 2358 / NCIMB 9240 / NCTC 8049) protein is Translation initiation factor IF-2.